We begin with the raw amino-acid sequence, 30 residues long: FVYGNGVTSILVQAQFLVNGQRRFFYTPDK.

It belongs to the bacteriocin class IIA/YGNGV family.

It is found in the secreted. Functionally, bacteriocin with antibacterial activity against C.jejuni. The chain is Bacteriocin SRCAM 37 from Paenibacillus polymyxa (Bacillus polymyxa).